Reading from the N-terminus, the 209-residue chain is Endoplasmic reticulum vesicle protein 25 (209 aa).

The first 18 residues, 1–18 (MKYTTFGIISLFLSVTWA), serve as a signal peptide directing secretion. Topologically, residues 19 to 178 (LRFELAASFE…TNESTNRRVR (160 aa)) are lumenal. Positions 31–119 (PFCIRDFVEA…MRNVEVNIES (89 aa)) constitute a GOLD domain. A helical transmembrane segment spans residues 179 to 199 (NFSMAVIVVFAALCAWQLNYL). At 200 to 209 (KNYFRAKHII) the chain is on the cytoplasmic side.

This sequence belongs to the EMP24/GP25L family.

The protein localises to the endoplasmic reticulum membrane. It localises to the golgi apparatus membrane. Its function is as follows. Constituent of COPII-coated endoplasmic reticulum-derived transport vesicles. Required for efficient transport of a subset of secretory proteins to the Golgi. Facilitates retrograde transport from the Golgi to the endoplasmic reticulum. The sequence is that of Endoplasmic reticulum vesicle protein 25 (ERV25) from Eremothecium gossypii (strain ATCC 10895 / CBS 109.51 / FGSC 9923 / NRRL Y-1056) (Yeast).